The chain runs to 249 residues: Chitooligosaccharide deacetylase (249 aa).

Mg(2+)-binding residues include H61 and H125.

Belongs to the YdjC deacetylase family. ChbG subfamily. As to quaternary structure, homodimer. The cofactor is Mg(2+).

It is found in the cytoplasm. It catalyses the reaction N,N'-diacetylchitobiose + H2O = N-acetyl-beta-D-glucosaminyl-(1-&gt;4)-D-glucosamine + acetate. The enzyme catalyses diacetylchitobiose-6'-phosphate + H2O = N'-monoacetylchitobiose-6'-phosphate + acetate. The protein operates within glycan degradation; chitin degradation. Involved in the degradation of chitin. ChbG is essential for growth on the acetylated chitooligosaccharides chitobiose and chitotriose but is dispensable for growth on cellobiose and chitosan dimer, the deacetylated form of chitobiose. Deacetylation of chitobiose-6-P and chitotriose-6-P is necessary for both the activation of the chb promoter by the regulatory protein ChbR and the hydrolysis of phosphorylated beta-glucosides by the phospho-beta-glucosidase ChbF. Catalyzes the removal of only one acetyl group from chitobiose-6-P to yield monoacetylchitobiose-6-P, the inducer of ChbR and the substrate of ChbF. In Escherichia coli O7:K1 (strain IAI39 / ExPEC), this protein is Chitooligosaccharide deacetylase.